Here is a 336-residue protein sequence, read N- to C-terminus: Uridine nucleosidase 1 (336 aa).

Active-site residues include Asp-29 and His-260.

It belongs to the IUNH family. As to quaternary structure, homodimer. Component of the NSH heterocomplex made of URH1/NSH1 and URH2/NSH2 which exhibits strong xanthosine nucleosidase activity. Interacts with URH2. As to expression, expressed ubiquitously in leaves, flowers, stems, pollen cells, root tip meristem and root vasculature.

The protein localises to the cytoplasm. It carries out the reaction uridine + H2O = D-ribose + uracil. It catalyses the reaction xanthosine + H2O = D-ribose + xanthine. The catalysed reaction is inosine + H2O = hypoxanthine + D-ribose. The enzyme catalyses adenosine + H2O = D-ribose + adenine. In terms of biological role, involved in purine and pyrimidine breakdown rather than in pyrimidine salvage, especially in response to dark stress. Together with URH2, required for efficient inosine and xanthosine hydrolytic activities. Unable to use cytidine as a substrate. Can use uridine, inosine, adenosine as well as the cytokinin derivative isopentenyladenine-riboside as substrates. Also hydrolyzes xanthosine with high efficiency. The sequence is that of Uridine nucleosidase 1 from Arabidopsis thaliana (Mouse-ear cress).